A 587-amino-acid polypeptide reads, in one-letter code: Cyclic GMP-AMP synthase-like receptor (587 aa).

2 disordered regions span residues 26–48 and 77–229; these read IHPS…RRDD and TRMH…DRPL. Basic and acidic residues-rich tracts occupy residues 95–138, 150–185, and 204–228; these read TRDR…RDSL, DGAR…RESL, and PESR…HDRP. The Mg(2+) site is built by Glu-307, Asp-309, and Asp-409.

Belongs to the mab-21 family. Mg(2+) is required as a cofactor. Requires Mn(2+) as cofactor.

It catalyses the reaction UTP + ATP = 2',3'-cUAMP + 2 diphosphate. Functionally, nucleotidyltransferase that catalyzes the formation of cyclic UMP-AMP (2',3'-cUAMP) from ATP and UTP and plays a key role in innate immunity. Acts as a key sensor of double-stranded DNA (dsDNA), the presence of dsDNA in the cytoplasm being a danger signal that triggers the immune responses. Directly binds dsDNA, activating the nucleotidyltransferase activity, leading to synthesis of 2',3'-cUAMP, a second messenger that binds to and activates Sting, thereby triggering the immune response via activation of the NF-kappa-B transcription factor. The sequence is that of Cyclic GMP-AMP synthase-like receptor from Magallana gigas (Pacific oyster).